A 423-amino-acid chain; its full sequence is Putative galacturan 1,4-alpha-galacturonidase C (423 aa).

The signal sequence occupies residues 1-20 (MQLRASVLLSFLGLASVGHA). Asparagine 92, asparagine 98, asparagine 118, asparagine 156, asparagine 179, and asparagine 191 each carry an N-linked (GlcNAc...) asparagine glycan. PbH1 repeat units lie at residues 215-236 (ATNI…AIKP) and 238-258 (SYNI…AIGS). Catalysis depends on aspartate 229, which acts as the Proton donor. Cysteine 231 and cysteine 248 are joined by a disulfide. N-linked (GlcNAc...) asparagine glycosylation is found at asparagine 245, asparagine 344, and asparagine 362. Cysteine 379 and cysteine 385 are joined by a disulfide. The N-linked (GlcNAc...) asparagine glycan is linked to asparagine 400.

The protein belongs to the glycosyl hydrolase 28 family.

It is found in the secreted. It carries out the reaction [(1-&gt;4)-alpha-D-galacturonosyl](n) + H2O = alpha-D-galacturonate + [(1-&gt;4)-alpha-D-galacturonosyl](n-1). Its function is as follows. Specific in hydrolyzing the terminal glycosidic bond of polygalacturonic acid and oligogalacturonates. The polypeptide is Putative galacturan 1,4-alpha-galacturonidase C (rgxC) (Aspergillus niger (strain ATCC MYA-4892 / CBS 513.88 / FGSC A1513)).